Here is a 609-residue protein sequence, read N- to C-terminus: UvrABC system protein C (609 aa).

The GIY-YIG domain maps to 15-92; that stretch reads TGSGVYQMQD…IKQFRPRYNV (78 aa). A UVR domain is found at 202-237; that stretch reads DQVIIKLTERMEVASENLVFEEAAHYRDQIRQLRRL.

Belongs to the UvrC family. Interacts with UvrB in an incision complex.

It localises to the cytoplasm. In terms of biological role, the UvrABC repair system catalyzes the recognition and processing of DNA lesions. UvrC both incises the 5' and 3' sides of the lesion. The N-terminal half is responsible for the 3' incision and the C-terminal half is responsible for the 5' incision. This Coxiella burnetii (strain CbuG_Q212) (Coxiella burnetii (strain Q212)) protein is UvrABC system protein C.